The sequence spans 517 residues: Cobyric acid synthase (517 aa).

A GATase cobBQ-type domain is found at 253–453 (EVEIAVIKLP…IHGILDNDSL (201 aa)). Cys334 functions as the Nucleophile in the catalytic mechanism. Residue His445 is part of the active site.

The protein belongs to the CobB/CobQ family. CobQ subfamily.

The protein operates within cofactor biosynthesis; adenosylcobalamin biosynthesis. In terms of biological role, catalyzes amidations at positions B, D, E, and G on adenosylcobyrinic A,C-diamide. NH(2) groups are provided by glutamine, and one molecule of ATP is hydrogenolyzed for each amidation. The polypeptide is Cobyric acid synthase (Moorella thermoacetica (strain ATCC 39073 / JCM 9320)).